The following is a 98-amino-acid chain: DNA-binding protein Fis (98 aa).

Residues Gln74 to Lys93 constitute a DNA-binding region (H-T-H motif).

The protein belongs to the transcriptional regulatory Fis family. As to quaternary structure, homodimer.

Its function is as follows. Activates ribosomal RNA transcription. Plays a direct role in upstream activation of rRNA promoters. The sequence is that of DNA-binding protein Fis from Glaesserella parasuis serovar 5 (strain SH0165) (Haemophilus parasuis).